Here is a 252-residue protein sequence, read N- to C-terminus: ATP synthase subunit a (252 aa).

The next 6 membrane-spanning stretches (helical) occupy residues 29–49 (FTNV…FLFI), 87–107 (FFPL…IGLF), 117–137 (IMIT…CGFY), 146–166 (LFVP…IEVI), 196–216 (FIVS…LPLI), and 219–239 (VAIT…FTVL).

It belongs to the ATPase A chain family. As to quaternary structure, F-type ATPases have 2 components, CF(1) - the catalytic core - and CF(0) - the membrane proton channel. CF(1) has five subunits: alpha(3), beta(3), gamma(1), delta(1), epsilon(1). CF(0) has three main subunits: a(1), b(2) and c(9-12). The alpha and beta chains form an alternating ring which encloses part of the gamma chain. CF(1) is attached to CF(0) by a central stalk formed by the gamma and epsilon chains, while a peripheral stalk is formed by the delta and b chains.

It localises to the cell inner membrane. Its function is as follows. Key component of the proton channel; it plays a direct role in the translocation of protons across the membrane. This Bartonella bacilliformis (strain ATCC 35685 / KC583 / Herrer 020/F12,63) protein is ATP synthase subunit a.